Reading from the N-terminus, the 609-residue chain is Indole-3-acetic acid-amido synthetase GH3.17 (609 aa).

This sequence belongs to the IAA-amido conjugating enzyme family.

Catalyzes the synthesis of indole-3-acetic acid (IAA)-amino acid conjugates, providing a mechanism for the plant to cope with the presence of excess auxin. Strongly reactive with Glu, Gln, Trp, Asp, Ala, Leu, Phe, Gly, Tyr, Met, Ile and Val. Appears to favor Glu over Asp while the other GH3 favor Asp over Glu. Little or no product formation with His, Ser, Thr, Arg, Lys, or Cys. Also active on pyruvic and butyric acid analogs of IAA, PAA and the synthetic auxin naphthaleneacetic acid (NAA). The two chlorinated synthetic auxin herbicides 2,4-D and 3,6-dichloro-o-anisic acid (dicamba) cannot be used as substrates. The chain is Indole-3-acetic acid-amido synthetase GH3.17 (GH3.17) from Arabidopsis thaliana (Mouse-ear cress).